Here is a 161-residue protein sequence, read N- to C-terminus: 2-C-methyl-D-erythritol 2,4-cyclodiphosphate synthase (161 aa).

Residues Asp-9 and His-11 each coordinate a divalent metal cation. Residues 9–11 (DFH) and 37–38 (HS) each bind 4-CDP-2-C-methyl-D-erythritol 2-phosphate. Position 45 (His-45) interacts with a divalent metal cation. 4-CDP-2-C-methyl-D-erythritol 2-phosphate contacts are provided by residues 59 to 61 (DIG), 64 to 68 (FPDTD), 135 to 138 (TTTE), and Arg-145.

Belongs to the IspF family. Homotrimer. Requires a divalent metal cation as cofactor.

The enzyme catalyses 4-CDP-2-C-methyl-D-erythritol 2-phosphate = 2-C-methyl-D-erythritol 2,4-cyclic diphosphate + CMP. The protein operates within isoprenoid biosynthesis; isopentenyl diphosphate biosynthesis via DXP pathway; isopentenyl diphosphate from 1-deoxy-D-xylulose 5-phosphate: step 4/6. Its function is as follows. Involved in the biosynthesis of isopentenyl diphosphate (IPP) and dimethylallyl diphosphate (DMAPP), two major building blocks of isoprenoid compounds. Catalyzes the conversion of 4-diphosphocytidyl-2-C-methyl-D-erythritol 2-phosphate (CDP-ME2P) to 2-C-methyl-D-erythritol 2,4-cyclodiphosphate (ME-CPP) with a corresponding release of cytidine 5-monophosphate (CMP). The sequence is that of 2-C-methyl-D-erythritol 2,4-cyclodiphosphate synthase from Leptospira interrogans serogroup Icterohaemorrhagiae serovar Lai (strain 56601).